We begin with the raw amino-acid sequence, 132 residues long: Small ribosomal subunit protein uS8 (132 aa).

Belongs to the universal ribosomal protein uS8 family. In terms of assembly, part of the 30S ribosomal subunit. Contacts proteins S5 and S12.

One of the primary rRNA binding proteins, it binds directly to 16S rRNA central domain where it helps coordinate assembly of the platform of the 30S subunit. The sequence is that of Small ribosomal subunit protein uS8 from Coprothermobacter proteolyticus (strain ATCC 35245 / DSM 5265 / OCM 4 / BT).